The following is a 100-amino-acid chain: Putative insulin-like peptide beta-type 6 (100 aa).

The signal sequence occupies residues 1–18 (MHSIVALMLIGTILPIAA). Intrachain disulfides connect C54/C83, C66/C96, C70/C97, and C82/C87.

Belongs to the insulin family.

The protein resides in the secreted. This is Putative insulin-like peptide beta-type 6 (ins-5) from Caenorhabditis elegans.